The sequence spans 390 residues: uncharacterized protein (390 aa).

The protein belongs to the peptidase M24 family.

This is an uncharacterized protein from Sinorhizobium fredii (strain NBRC 101917 / NGR234).